Here is a 224-residue protein sequence, read N- to C-terminus: Ribosomal RNA large subunit methyltransferase E (224 aa).

Glycine 64, tryptophan 66, aspartate 97, aspartate 113, and aspartate 138 together coordinate S-adenosyl-L-methionine. Catalysis depends on lysine 178, which acts as the Proton acceptor.

The protein belongs to the class I-like SAM-binding methyltransferase superfamily. RNA methyltransferase RlmE family.

It localises to the cytoplasm. The catalysed reaction is uridine(2552) in 23S rRNA + S-adenosyl-L-methionine = 2'-O-methyluridine(2552) in 23S rRNA + S-adenosyl-L-homocysteine + H(+). In terms of biological role, specifically methylates the uridine in position 2552 of 23S rRNA at the 2'-O position of the ribose in the fully assembled 50S ribosomal subunit. The chain is Ribosomal RNA large subunit methyltransferase E from Albidiferax ferrireducens (strain ATCC BAA-621 / DSM 15236 / T118) (Rhodoferax ferrireducens).